The sequence spans 257 residues: Acetylglutamate kinase (257 aa).

Substrate is bound by residues 43 to 44 (GG), Arg-65, and Asn-157.

The protein belongs to the acetylglutamate kinase family. ArgB subfamily.

The protein localises to the cytoplasm. It carries out the reaction N-acetyl-L-glutamate + ATP = N-acetyl-L-glutamyl 5-phosphate + ADP. It participates in amino-acid biosynthesis; L-arginine biosynthesis; N(2)-acetyl-L-ornithine from L-glutamate: step 2/4. Functionally, catalyzes the ATP-dependent phosphorylation of N-acetyl-L-glutamate. This chain is Acetylglutamate kinase, found in Pasteurella multocida (strain Pm70).